The following is a 270-amino-acid chain: Eukaryotic translation initiation factor 3 subunit G-1 (270 aa).

Positions Ala189–Pro267 constitute an RRM domain.

It belongs to the eIF-3 subunit G family. As to quaternary structure, component of the eukaryotic translation initiation factor 3 (eIF-3) complex. The eIF-3 complex interacts with pix.

The protein resides in the cytoplasm. Its function is as follows. RNA-binding component of the eukaryotic translation initiation factor 3 (eIF-3) complex, which is involved in protein synthesis of a specialized repertoire of mRNAs and, together with other initiation factors, stimulates binding of mRNA and methionyl-tRNAi to the 40S ribosome. The eIF-3 complex specifically targets and initiates translation of a subset of mRNAs involved in cell proliferation. This subunit can bind 18S rRNA. The chain is Eukaryotic translation initiation factor 3 subunit G-1 from Drosophila ananassae (Fruit fly).